The chain runs to 872 residues: Eukaryotic translation initiation factor 3 subunit C (872 aa).

The segment at 1 to 100 (MSRFFRGGDD…KVKSAKDKRF (100 aa)) is disordered. Acidic residues-rich tracts occupy residues 16 to 59 (SSEE…DEEE) and 72 to 87 (SDDE…SDDE). Basic and acidic residues predominate over residues 88–100 (ATTKVKSAKDKRF). In terms of domain architecture, PCI spans 613 to 787 (FHMHINLELL…ETVIFRKGVE (175 aa)). Residues 812–872 (TLEQKTQGSA…GGALGNAVRG (61 aa)) form a disordered region. The segment covering 831-848 (GGGQRGGGQRGGRGGART) has biased composition (gly residues).

Belongs to the eIF-3 subunit C family. As to quaternary structure, component of the eukaryotic translation initiation factor 3 (eIF-3) complex.

The protein resides in the cytoplasm. In terms of biological role, component of the eukaryotic translation initiation factor 3 (eIF-3) complex, which is involved in protein synthesis of a specialized repertoire of mRNAs and, together with other initiation factors, stimulates binding of mRNA and methionyl-tRNAi to the 40S ribosome. The eIF-3 complex specifically targets and initiates translation of a subset of mRNAs involved in cell proliferation. This Neurospora crassa (strain ATCC 24698 / 74-OR23-1A / CBS 708.71 / DSM 1257 / FGSC 987) protein is Eukaryotic translation initiation factor 3 subunit C (nip-1).